The chain runs to 297 residues: tRNA (guanine-N(7)-)-methyltransferase (297 aa).

S-adenosyl-L-methionine contacts are provided by residues Gly101, 124-125 (EI), 171-172 (NT), and Cys191. Asp194 is a catalytic residue. An S-adenosyl-L-methionine-binding site is contributed by 270–272 (TEE).

The protein belongs to the class I-like SAM-binding methyltransferase superfamily. TrmB family. Forms a complex with trm82.

Its subcellular location is the nucleus. The catalysed reaction is guanosine(46) in tRNA + S-adenosyl-L-methionine = N(7)-methylguanosine(46) in tRNA + S-adenosyl-L-homocysteine. Its pathway is tRNA modification; N(7)-methylguanine-tRNA biosynthesis. Catalyzes the formation of N(7)-methylguanine at position 46 (m7G46) in tRNA. The protein is tRNA (guanine-N(7)-)-methyltransferase (trm8) of Aspergillus niger (strain ATCC MYA-4892 / CBS 513.88 / FGSC A1513).